The following is an 87-amino-acid chain: MSERNQRKVYTGRVVSDKMDKTITVLVETYKTHSLYGKRVKYSKKYKAHDEQNQAKLGDIVKIMETRPLSATKRFRLVEIVEEAVII.

Belongs to the universal ribosomal protein uS17 family. In terms of assembly, part of the 30S ribosomal subunit.

Functionally, one of the primary rRNA binding proteins, it binds specifically to the 5'-end of 16S ribosomal RNA. This chain is Small ribosomal subunit protein uS17, found in Bacillus thuringiensis (strain Al Hakam).